A 257-amino-acid polypeptide reads, in one-letter code: Phycoerythrobilin:ferredoxin oxidoreductase (257 aa).

This sequence belongs to the HY2 family.

The catalysed reaction is (3Z)-phycoerythrobilin + oxidized 2[4Fe-4S]-[ferredoxin] = 15,16-dihydrobiliverdin + reduced 2[4Fe-4S]-[ferredoxin] + 2 H(+). Functionally, catalyzes the two-electron reduction of the C2 and C3(1) diene system of 15,16-dihydrobiliverdin. This is Phycoerythrobilin:ferredoxin oxidoreductase (pebB) from Prochlorococcus marinus subsp. pastoris (strain CCMP1986 / NIES-2087 / MED4).